Consider the following 213-residue polypeptide: N-(5'-phosphoribosyl)anthranilate isomerase (213 aa).

This sequence belongs to the TrpF family.

The catalysed reaction is N-(5-phospho-beta-D-ribosyl)anthranilate = 1-(2-carboxyphenylamino)-1-deoxy-D-ribulose 5-phosphate. It functions in the pathway amino-acid biosynthesis; L-tryptophan biosynthesis; L-tryptophan from chorismate: step 3/5. This Rhodopseudomonas palustris (strain ATCC BAA-98 / CGA009) protein is N-(5'-phosphoribosyl)anthranilate isomerase.